Here is a 452-residue protein sequence, read N- to C-terminus: Bifunctional protein GlmU (452 aa).

A pyrophosphorylase region spans residues 1–224; that stretch reads MNIVILAAGQ…EWEVLGVNSK (224 aa). Residues 6 to 9, Lys-20, Gln-71, 76 to 77, 98 to 100, Gly-134, Glu-149, Asn-164, and Asn-222 contribute to the UDP-N-acetyl-alpha-D-glucosamine site; these read LAAG, GT, and YGD. A Mg(2+)-binding site is contributed by Asp-100. A Mg(2+)-binding site is contributed by Asn-222. A linker region spans residues 225–245; the sequence is VQLAELERQHQLNLAGELLVA. The segment at 246–452 is N-acetyltransferase; it reads GVRLADPARI…GWERPKKVKK (207 aa). UDP-N-acetyl-alpha-D-glucosamine-binding residues include Arg-328 and Lys-346. Catalysis depends on His-358, which acts as the Proton acceptor. UDP-N-acetyl-alpha-D-glucosamine contacts are provided by Tyr-361 and Asn-372. Residues Ala-375, 381–382, Ser-400, Ala-418, and Arg-435 each bind acetyl-CoA; that span reads NY.

This sequence in the N-terminal section; belongs to the N-acetylglucosamine-1-phosphate uridyltransferase family. It in the C-terminal section; belongs to the transferase hexapeptide repeat family. In terms of assembly, homotrimer. Requires Mg(2+) as cofactor.

Its subcellular location is the cytoplasm. It carries out the reaction alpha-D-glucosamine 1-phosphate + acetyl-CoA = N-acetyl-alpha-D-glucosamine 1-phosphate + CoA + H(+). The enzyme catalyses N-acetyl-alpha-D-glucosamine 1-phosphate + UTP + H(+) = UDP-N-acetyl-alpha-D-glucosamine + diphosphate. It functions in the pathway nucleotide-sugar biosynthesis; UDP-N-acetyl-alpha-D-glucosamine biosynthesis; N-acetyl-alpha-D-glucosamine 1-phosphate from alpha-D-glucosamine 6-phosphate (route II): step 2/2. Its pathway is nucleotide-sugar biosynthesis; UDP-N-acetyl-alpha-D-glucosamine biosynthesis; UDP-N-acetyl-alpha-D-glucosamine from N-acetyl-alpha-D-glucosamine 1-phosphate: step 1/1. It participates in bacterial outer membrane biogenesis; LPS lipid A biosynthesis. Its function is as follows. Catalyzes the last two sequential reactions in the de novo biosynthetic pathway for UDP-N-acetylglucosamine (UDP-GlcNAc). The C-terminal domain catalyzes the transfer of acetyl group from acetyl coenzyme A to glucosamine-1-phosphate (GlcN-1-P) to produce N-acetylglucosamine-1-phosphate (GlcNAc-1-P), which is converted into UDP-GlcNAc by the transfer of uridine 5-monophosphate (from uridine 5-triphosphate), a reaction catalyzed by the N-terminal domain. The chain is Bifunctional protein GlmU from Dechloromonas aromatica (strain RCB).